The sequence spans 205 residues: Ras-related protein rab-6.2 (205 aa).

Residues 18–25 (EQSVGKTS), T42, 66–70 (TAGQE), and 124–127 (KTDL) each bind GTP. S-geranylgeranyl cysteine attachment occurs at residues C203 and C205. Cysteine methyl ester is present on C205.

It belongs to the small GTPase superfamily. Rab family. Interacts with GARP complex component vps-52. Interacts (in GTP-bound form) with lin-10. May interact (in GTP-bound form) with eat-17. Highly expressed in body wall muscles, pharyngeal and vulval muscles, hypodermis, intestine, the gonad, coelomocytes, and neurons, including command interneuron (at protein level). Highly expressed in the terminal bulb muscles.

It is found in the perikaryon. The protein resides in the cell projection. The protein localises to the dendrite. Its subcellular location is the golgi apparatus. It localises to the cytoplasmic vesicle. The small GTPases Rab are key regulators of intracellular membrane trafficking, from the formation of transport vesicles to their fusion with membranes. Rabs cycle between an inactive GDP-bound form and an active GTP-bound form that is able to recruit to membranes different set of downstream effectors directly responsible for vesicle formation, movement, tethering and fusion. In its active GTP-bound form, acts redundantly with rab-6.1 (in its active GTP-bound form) to positively regulate the retrograde trafficking of cargo molecules from endosomes to the Golgi compartment. Required for the retrograde trafficking of glr-1, a subunit of AMPA-type glutamate receptors (AMPRs), out of early endosomes and into the Golgi compartment in neurons. Its role in glr-1 trafficking may partly be mediated by its interaction with lin-10 and association with components of the retromer complex such as rme-8. Together with rab-6.2, promotes the retrograde trafficking of mig-14 from endosomes to Golgi structures in the intestine. Plays a role in the epidermis to promote cuticle integrity and impermeability of the cuticle barrier to exogenous molecules. May have a role in the glycosylation of the cuticular surface. Required for seam cell division and alae formation. Required for grinder formation, which is the feeding organ that breaks down food. In contrast to rab-6.1, may play a minor role in the exocytosis of secretory vesicles (cortical granules) during the oocyte-to-embryo transition. The sequence is that of Ras-related protein rab-6.2 from Caenorhabditis elegans.